Reading from the N-terminus, the 310-residue chain is tRNA-cytidine(32) 2-sulfurtransferase (310 aa).

Residues 47-52 (SGGKDS) carry the PP-loop motif motif. Residues Cys122, Cys125, and Cys213 each contribute to the [4Fe-4S] cluster site.

The protein belongs to the TtcA family. As to quaternary structure, homodimer. Requires Mg(2+) as cofactor. [4Fe-4S] cluster is required as a cofactor.

Its subcellular location is the cytoplasm. The enzyme catalyses cytidine(32) in tRNA + S-sulfanyl-L-cysteinyl-[cysteine desulfurase] + AH2 + ATP = 2-thiocytidine(32) in tRNA + L-cysteinyl-[cysteine desulfurase] + A + AMP + diphosphate + H(+). The protein operates within tRNA modification. Catalyzes the ATP-dependent 2-thiolation of cytidine in position 32 of tRNA, to form 2-thiocytidine (s(2)C32). The sulfur atoms are provided by the cysteine/cysteine desulfurase (IscS) system. The protein is tRNA-cytidine(32) 2-sulfurtransferase of Serratia proteamaculans (strain 568).